The chain runs to 424 residues: Imidazolonepropionase (424 aa).

Residues His85 and His87 each coordinate Fe(3+). Zn(2+)-binding residues include His85 and His87. Residues Arg94, Tyr157, and His190 each contribute to the 4-imidazolone-5-propanoate site. Tyr157 contributes to the N-formimidoyl-L-glutamate binding site. His255 contributes to the Fe(3+) binding site. Residue His255 coordinates Zn(2+). Glu258 contacts 4-imidazolone-5-propanoate. Residue Asp329 participates in Fe(3+) binding. Position 329 (Asp329) interacts with Zn(2+). Asn331 and Gly333 together coordinate N-formimidoyl-L-glutamate. Position 334 (Ser334) interacts with 4-imidazolone-5-propanoate.

The protein belongs to the metallo-dependent hydrolases superfamily. HutI family. Zn(2+) is required as a cofactor. The cofactor is Fe(3+).

The protein resides in the cytoplasm. It catalyses the reaction 4-imidazolone-5-propanoate + H2O = N-formimidoyl-L-glutamate. It functions in the pathway amino-acid degradation; L-histidine degradation into L-glutamate; N-formimidoyl-L-glutamate from L-histidine: step 3/3. In terms of biological role, catalyzes the hydrolytic cleavage of the carbon-nitrogen bond in imidazolone-5-propanoate to yield N-formimidoyl-L-glutamate. It is the third step in the universal histidine degradation pathway. This is Imidazolonepropionase from Brevibacillus brevis (strain 47 / JCM 6285 / NBRC 100599).